The primary structure comprises 597 residues: Nuclear receptor subfamily 4 group A member 1 (597 aa).

A disordered region spans residues 1 to 22; the sequence is MPCIQAQYGTPATSPGPRDHLT. The tract at residues 170-465 is required for nuclear import; the sequence is RVWTEQLPKA…PGEGKLIFCS (296 aa). A DNA-binding region (nuclear receptor) is located at residues 263–338; the sequence is EGRCAVCGDN…VGMVKEVVRT (76 aa). 2 consecutive NR C4-type zinc fingers follow at residues 266-286 and 302-326; these read CAVC…CEGC and CLAN…FQKC. The interval 267 to 353 is required for binding NBRE-containing DNA; sequence AVCGDNASCQ…RRGRLPSKPK (87 aa). Positions 298 to 360 are required for the interaction with RXRA; the sequence is AKYICLANKD…KPKQPPDASP (63 aa). At S340 the chain carries Phosphoserine; by PKA. A disordered region spans residues 341–360; the sequence is LKGRRGRLPSKPKQPPDASP. A Phosphoserine; by PKA, RPS6KA1 and RPS6KA3 modification is found at S350. One can recognise an NR LBD domain in the interval 359-594; the sequence is SPTNLLTSLI…PIVDKIFMDT (236 aa). The binds lipopolysaccharide stretch occupies residues 520-543; sequence PRRVEELQNRIASCLKEHMAAVAG. Positions 583–594 are AF-2; the sequence is PPPIVDKIFMDT.

This sequence belongs to the nuclear hormone receptor family. NR4 subfamily. In terms of assembly, binds the NGFI-B response element (NBRE) as a monomer. Binds the Nur response element (NurRE), consisting of two inverse NBRE-related octanucleotide repeats separated by 6 base-pairs, as a dimer. Interacts (via N-terminus) with NLRP3 (via LRR repeat domain); the interaction is direct, requires binding of NR4A1/Nur77 to NBRE-containing dsDNA and lipopolysaccharide, and leads to non-canonical NLRP3 inflammasome activation. Interacts with GADD45GIP1. Interacts with STK11. Interacts with IFI27. Heterodimer (via DNA-binding domain) with RXRA (via C-terminus); DNA-binding of the heterodimer is enhanced by 9-cis retinoic acid. Competes for the RXRA interaction with EP300 and thereby attenuates EP300 mediated acetylation of RXRA. Interacts with NCOA1. Interacts with NCOA2. Interacts with NCOA3. Zn(2+) serves as cofactor. In terms of processing, phosphorylated at Ser-350 by RPS6KA1 and RPS6KA3 in response to mitogenic or stress stimuli. Phosphorylation of Ser-350 results in decrease in NBRE binding while phosphorylation of Ser-340 has little effect on it. Acetylated by p300/CBP, acetylation increases stability. Deacetylated by HDAC1. As to expression, expressed in lung, brain and superior cervical ganglia. High levels are seen in the adrenal tissue.

Its subcellular location is the nucleus. It is found in the cytoplasm. It localises to the cytosol. The protein localises to the mitochondrion. In terms of biological role, orphan nuclear receptor. Binds the NGFI-B response element (NBRE) 5'-AAAGGTCA-3'. Binds 9-cis-retinoic acid outside of its ligand-binding (NR LBD) domain. Participates in energy homeostasis by sequestrating the kinase STK11 in the nucleus, thereby attenuating cytoplasmic AMPK activation. Regulates the inflammatory response in macrophages by regulating metabolic adaptations during inflammation, including repressing the transcription of genes involved in the citric acid cycle (TCA). Inhibits NF-kappa-B signaling by binding to low-affinity NF-kappa-B binding sites, such as at the IL2 promoter. May act concomitantly with NR4A2 in regulating the expression of delayed-early genes during liver regeneration. Plays a role in the vascular response to injury. In the cytosol, upon its detection of both bacterial lipopolysaccharide (LPS) and NBRE-containing mitochondrial DNA released by GSDMD pores during pyroptosis, it promotes non-canonical NLRP3 inflammasome activation by stimulating association of NLRP3 and NEK7. The chain is Nuclear receptor subfamily 4 group A member 1 (Nr4a1) from Rattus norvegicus (Rat).